Consider the following 486-residue polypeptide: Protein DETOXIFICATION 27 (486 aa).

The segment at 1-25 (MRGGDGEEGSESRVALLKSPHTAEE) is disordered. 12 helical membrane passes run 41 to 61 (LWQI…MLVI), 74 to 94 (LAAI…LLLG), 124 to 144 (IVLF…TPVL), 153 to 173 (IAEL…AFTL), 189 to 209 (VTAY…WLFV), 216 to 236 (VVGT…ILLV), 269 to 289 (GVML…TGNL), 299 to 319 (LSIC…FFAG), 349 to 369 (IIGL…AWIF), 384 to 404 (LLLA…GVAV), 407 to 427 (GWQS…GVPL), and 439 to 461 (VMGI…LSFI).

This sequence belongs to the multi antimicrobial extrusion (MATE) (TC 2.A.66.1) family.

It is found in the membrane. In Arabidopsis thaliana (Mouse-ear cress), this protein is Protein DETOXIFICATION 27.